Consider the following 475-residue polypeptide: Tubulin epsilon chain (475 aa).

148-154 (GGGTGSG) contributes to the GTP binding site.

Belongs to the tubulin family. Found in a complex with TEDC1, TEDC2, TUBE1 and TUBD1.

The protein resides in the cytoplasm. It is found in the cytoskeleton. Its subcellular location is the microtubule organizing center. The protein localises to the centrosome. This chain is Tubulin epsilon chain (Tube1), found in Mus musculus (Mouse).